Here is a 246-residue protein sequence, read N- to C-terminus: Probable phosphatase ASA_1316 (246 aa).

Residues H8, H10, H16, H41, E74, H102, H132, D193, and H195 each contribute to the Zn(2+) site.

It belongs to the PHP family. The cofactor is Zn(2+).

The sequence is that of Probable phosphatase ASA_1316 from Aeromonas salmonicida (strain A449).